The chain runs to 460 residues: GTPase Der (460 aa).

EngA-type G domains follow at residues 2 to 164 (KKVI…DDEI) and 199 to 370 (IKVG…ANFT). GTP-binding positions include 8-15 (GRPNVGKS), 55-59 (DSGGL), 116-119 (NKID), 205-212 (GRVNVGKS), 252-256 (DTAGI), and 316-319 (NKWD). The 84-residue stretch at 371-454 (QKIATSKLND…PVILLPRKRG (84 aa)) folds into the KH-like domain.

It belongs to the TRAFAC class TrmE-Era-EngA-EngB-Septin-like GTPase superfamily. EngA (Der) GTPase family. Associates with the 50S ribosomal subunit.

In terms of biological role, GTPase that plays an essential role in the late steps of ribosome biogenesis. The polypeptide is GTPase Der (Campylobacter hominis (strain ATCC BAA-381 / DSM 21671 / CCUG 45161 / LMG 19568 / NCTC 13146 / CH001A)).